A 183-amino-acid polypeptide reads, in one-letter code: Glutathione-regulated potassium-efflux system ancillary protein KefG (183 aa).

The protein belongs to the NAD(P)H dehydrogenase (quinone) family. KefG subfamily. As to quaternary structure, interacts with KefB.

Its subcellular location is the cell inner membrane. It carries out the reaction a quinone + NADH + H(+) = a quinol + NAD(+). The enzyme catalyses a quinone + NADPH + H(+) = a quinol + NADP(+). Functionally, regulatory subunit of a potassium efflux system that confers protection against electrophiles. Required for full activity of KefB. This chain is Glutathione-regulated potassium-efflux system ancillary protein KefG, found in Enterobacter sp. (strain 638).